The following is a 524-amino-acid chain: Leucine-rich repeat-containing protein 1 (524 aa).

LRR repeat units follow at residues 11–34, 35–58, 60–81, 83–105, 107–126, 127–149, 150–172, 173–196, 198–218, 219–242, 244–264, 265–288, 290–310, 311–334, 336–356, 357–380, and 382–405; these read NRHV…IYRY, ARSL…FFQL, KLRK…IANF, QLVE…SFCK, LQVA…SFPE, LQNL…NIGN, LYNL…SLTQ, LRRL…IGAL, HLKD…EIGN, LKNL…ISGL, SLTD…GIGK, LKKL…VGEC, SLTE…SIGK, LKKL…IGGC, SLTV…EVSQ, ATEL…LTAL, and LKAL…TDYT. A Phosphothreonine modification is found at threonine 480. Residues 484–512 are a coiled coil; sequence GELKHMKKTVENLRNDMNAAKGLDSNKNE.

In terms of assembly, interacts with DLG1 and DLG4. May form a complex with DLG1 and ERBIN, where interaction between LRRC1 and ERBIN is indirect. Expressed strongly in testis and placenta, followed by heart, lung, kidney, thyroid, trachea, colon, prostate and pancreas.

The protein resides in the cytoplasm. The protein localises to the membrane. This is Leucine-rich repeat-containing protein 1 (LRRC1) from Homo sapiens (Human).